The following is a 1537-amino-acid chain: Histone-lysine N-methyltransferase, H3 lysine-79 specific (1537 aa).

The region spanning 16–330 (EPAVYPWPLP…ILENYFSSLK (315 aa)) is the DOT1 domain. S-adenosyl-L-methionine-binding positions include 136-139 (YGET), 159-168 (FVDLGSGVGQ), glutamate 186, and 222-223 (DF). The residue at position 297 (serine 297) is a Phosphoserine. A compositionally biased stretch (basic and acidic residues) spans 334-350 (LREEQEAARRRQQRESK). Residues 334-467 (LREEQEAARR…SPFYQLPPSV (134 aa)) form a disordered region. At serine 374 the chain carries Phosphoserine. The interval 391 to 416 (PSKARKKKLNKKGRKMAGRKRGRPKK) is required for interaction with nucleosomes and DNA. A compositionally biased stretch (basic residues) spans 393 to 416 (KARKKKLNKKGRKMAGRKRGRPKK). A compositionally biased stretch (polar residues) spans 439–450 (QTVSQTAASSPQ). A phosphoserine mark is found at serine 448 and serine 471. Threonine 480 bears the Phosphothreonine mark. 2 positions are modified to phosphoserine: serine 775 and serine 786. 4 disordered regions span residues 785-853 (LSQD…LRER), 893-912 (RAER…DPSS), 957-1128 (TPGA…LNLN), and 1145-1243 (SPET…KWKS). Basic and acidic residues predominate over residues 800 to 809 (LHSRAEHTKE). Phosphoserine is present on serine 826. Residue serine 834 is modified to Phosphoserine; by MAPK11. The span at 844-853 (KSSEKGLRER) shows a compositional bias: basic and acidic residues. Composition is skewed to polar residues over residues 899 to 912 (STPS…DPSS), 966 to 986 (DESS…STPQ), and 994 to 1010 (PRNS…SSSP). The residue at position 900 (threonine 900) is a Phosphothreonine; by MAPK11. Position 902 is a phosphoserine; by MAPK11 (serine 902). Phosphothreonine; by MAPK11 is present on threonine 984. Serine 997 is modified (phosphoserine). Residues serine 1001 and serine 1009 each carry the phosphoserine; by MAPK11 modification. Residue serine 1035 is modified to Phosphoserine. Residues 1048–1068 (TITTGAGSAKQSPSSKHSPLT) show a composition bias toward polar residues. Phosphoserine is present on serine 1093. Serine 1104 carries the phosphoserine; by MAPK11 modification. A compositionally biased stretch (polar residues) spans 1118–1128 (TQPSGSPLNLN). A compositionally biased stretch (basic and acidic residues) spans 1158–1171 (QDHDQPPVLKKERP). Over residues 1172–1184 (LSQTNGAHYSPLT) the composition is skewed to polar residues. Positions 1185-1195 (SDEEPGSEDEP) are enriched in acidic residues. Serine 1213 and serine 1246 each carry phosphoserine. Residues 1334-1410 (GASLPHKGPE…DKTPLLSGKA (77 aa)) are disordered.

This sequence belongs to the class I-like SAM-binding methyltransferase superfamily. DOT1 family. Interacts with MLLT10.

The protein localises to the nucleus. It catalyses the reaction L-lysyl(79)-[histone H3] + 3 S-adenosyl-L-methionine = N(6),N(6),N(6)-trimethyl-L-lysyl(79)-[histone H3] + 3 S-adenosyl-L-homocysteine + 3 H(+). Histone methyltransferase. Methylates 'Lys-79' of histone H3. Nucleosomes are preferred as substrate compared to free histones. Binds to DNA. The protein is Histone-lysine N-methyltransferase, H3 lysine-79 specific of Homo sapiens (Human).